A 173-amino-acid polypeptide reads, in one-letter code: Crossover junction endodeoxyribonuclease RuvC (173 aa).

Residues D8, E67, and D139 contribute to the active site. Positions 8, 67, and 139 each coordinate Mg(2+).

It belongs to the RuvC family. As to quaternary structure, homodimer which binds Holliday junction (HJ) DNA. The HJ becomes 2-fold symmetrical on binding to RuvC with unstacked arms; it has a different conformation from HJ DNA in complex with RuvA. In the full resolvosome a probable DNA-RuvA(4)-RuvB(12)-RuvC(2) complex forms which resolves the HJ. Mg(2+) serves as cofactor.

The protein localises to the cytoplasm. The enzyme catalyses Endonucleolytic cleavage at a junction such as a reciprocal single-stranded crossover between two homologous DNA duplexes (Holliday junction).. Its function is as follows. The RuvA-RuvB-RuvC complex processes Holliday junction (HJ) DNA during genetic recombination and DNA repair. Endonuclease that resolves HJ intermediates. Cleaves cruciform DNA by making single-stranded nicks across the HJ at symmetrical positions within the homologous arms, yielding a 5'-phosphate and a 3'-hydroxyl group; requires a central core of homology in the junction. The consensus cleavage sequence is 5'-(A/T)TT(C/G)-3'. Cleavage occurs on the 3'-side of the TT dinucleotide at the point of strand exchange. HJ branch migration catalyzed by RuvA-RuvB allows RuvC to scan DNA until it finds its consensus sequence, where it cleaves and resolves the cruciform DNA. This chain is Crossover junction endodeoxyribonuclease RuvC, found in Edwardsiella ictaluri (strain 93-146).